The following is a 144-amino-acid chain: MGISVKDVDSHTFTKALAAFLKKSGKMKIPEWATIIKLSKFNELSPYDEDWFYTRAASICRHLYIRSPAGVGALTKIYGDRKRNGTVPSHYCRSSGSVARRVLQALETQKLVEKDANGGRKLTSQGQKDLDRIAAQVKEKTKSK.

The protein belongs to the eukaryotic ribosomal protein eS19 family.

In Argopecten irradians (Bay scallop), this protein is Small ribosomal subunit protein eS19 (RPS19).